The primary structure comprises 99 residues: Orphan antixoxin protein TacA (99 aa).

Belongs to the TacA antitoxin family.

Putative antitoxin component of a toxin-antitoxin (TA) system; its cognate toxin (usually a tRNA acetylase) is unknown. This is Orphan antixoxin protein TacA from Haemophilus influenzae (strain ATCC 51907 / DSM 11121 / KW20 / Rd).